The sequence spans 285 residues: mRNA decay factor CTH2 (285 aa).

The segment at 37 to 55 (INIRELEEYYNKTILNEDN) is required for mRNA decay activity. The tract at residues 132–164 (LQQLSQQKPKNDASFSSEKESSAQPKVKSQVQE) is disordered. Residues 153-164 (SAQPKVKSQVQE) are compositionally biased toward polar residues. 2 consecutive C3H1-type zinc fingers follow at residues 169 to 197 (LYKT…HGLG) and 207 to 235 (NFRT…HGDD). Positions 252–271 (STSKQSDEKRSNGRGSAKKK) are disordered.

As to quaternary structure, interacts with DHH1.

The protein localises to the nucleus. Its subcellular location is the cytoplasm. It is found in the P-body. In terms of biological role, binds to specific AU-rich elements (ARE) in the 3'-untranslated region of target mRNAs and promotes their degradation. In response to iron deficiency, promotes the decay of many mRNAs encoding proteins involved in iron-dependent pathways. Recruits the DHH1 helicase to the SDH4 mRNA and promotes SDH4 mRNA decay. Also destabilizes target mRNA by modulating 3'-end processing, creating extended transcripts that are prone for degradation. This is mRNA decay factor CTH2 (TIS11) from Saccharomyces cerevisiae (strain ATCC 204508 / S288c) (Baker's yeast).